Reading from the N-terminus, the 897-residue chain is Probable basic-leucine zipper transcription factor R (897 aa).

Disordered stretches follow at residues D38 to T88 and Y128 to S198. The span at N44–N75 shows a compositional bias: low complexity. A compositionally biased stretch (polar residues) spans I76–T88. Positions Q94–D137 form a coiled coil. Low complexity predominate over residues Y128–Q140. The span at K141 to T157 shows a compositional bias: polar residues. A compositionally biased stretch (low complexity) spans N158–S198. 2 coiled-coil regions span residues L228–Q258 and Q330–Q407. Positions L461–Q516 are disordered. Positions I484–Q505 are enriched in pro residues. The span at Q506–Q516 shows a compositional bias: low complexity. One can recognise a bZIP domain in the interval E557 to E620. Residues K559–K564 are basic motif. The segment at I569 to L576 is leucine-zipper.

This sequence belongs to the bZIP family.

Its subcellular location is the nucleus. Its function is as follows. Probable transcriptional regulator. In Dictyostelium discoideum (Social amoeba), this protein is Probable basic-leucine zipper transcription factor R (bzpR).